The primary structure comprises 694 residues: Heat shock protein homolog SSE1 (694 aa).

The disordered stretch occupies residues 671-694; it reads AQRSADSEAKKDATPEGDAQMDLD. The segment covering 675–684 has biased composition (basic and acidic residues); the sequence is ADSEAKKDAT.

The protein belongs to the heat shock protein 70 family.

Its subcellular location is the cytoplasm. This is Heat shock protein homolog SSE1 (SSE1) from Candida glabrata (strain ATCC 2001 / BCRC 20586 / JCM 3761 / NBRC 0622 / NRRL Y-65 / CBS 138) (Yeast).